An 850-amino-acid chain; its full sequence is Protein monoglycylase TTLL8 (850 aa).

Disordered stretches follow at residues 1 to 29 (MEPE…QGIS) and 228 to 254 (RSSR…DAEN). A TTL domain is found at 222–580 (SHQSCSRSSR…DRSCDIGNFE (359 aa)). Residues lysine 354, 360–361 (RG), 392–395 (QKYI), 405–407 (KFD), and 449–450 (CN) contribute to the ATP site. Residue arginine 360 participates in a protein binding. Mg(2+)-binding residues include aspartate 527, glutamate 540, and asparagine 542. Glutamate 540 is a binding site for ATP. The interval 627 to 652 (AQPLKARGPSAMPDPAQGPPSPALQR) is disordered.

Requires Mg(2+) as cofactor.

It localises to the cytoplasm. The protein localises to the cytoskeleton. The protein resides in the cell projection. Its subcellular location is the cilium. It is found in the cilium axoneme. It localises to the flagellum axoneme. It catalyses the reaction L-glutamyl-[protein] + glycine + ATP = glycyl-L-glutamyl-[protein] + ADP + phosphate + H(+). Its function is as follows. Monoglycylase which modifies both tubulin and non-tubulin proteins, adding a single glycine to the gamma-carboxyl groups of specific glutamate residues to generate monoglycine side chains within the C-terminal tail of target proteins. Not involved in elongation step of the polyglycylation reaction. Preferentially monoglycylates alpha-tubulin over beta-tubulin. Together with TTLL3, mediates microtubule glycylation of primary and motile cilia, which is essential for their stability and maintenance. Together with TTLL3, glycylates sperm flagella which regulates axonemal dynein motor activity, thereby controlling flagellar beat, directional sperm swimming and male fertility. Monoglycylates non-tubulin proteins such as ANP32A, ANP32B, SET, NCL and NAP1. The sequence is that of Protein monoglycylase TTLL8 from Homo sapiens (Human).